The primary structure comprises 408 residues: Phosphoglycerate kinase (408 aa).

Residues 24 to 26, Arg-39, 62 to 65, Arg-121, and Arg-161 contribute to the substrate site; these read DLN and HLGR. ATP is bound by residues Lys-211, Gly-307, Glu-338, and 364 to 367; that span reads GGDS.

It belongs to the phosphoglycerate kinase family. As to quaternary structure, monomer.

It is found in the cytoplasm. The catalysed reaction is (2R)-3-phosphoglycerate + ATP = (2R)-3-phospho-glyceroyl phosphate + ADP. Its pathway is carbohydrate degradation; glycolysis; pyruvate from D-glyceraldehyde 3-phosphate: step 2/5. The sequence is that of Phosphoglycerate kinase from Arthrobacter sp. (strain FB24).